A 359-amino-acid chain; its full sequence is UDP-3-O-acylglucosamine N-acyltransferase (359 aa).

Histidine 248 acts as the Proton acceptor in catalysis.

The protein belongs to the transferase hexapeptide repeat family. LpxD subfamily. Homotrimer.

It catalyses the reaction a UDP-3-O-[(3R)-3-hydroxyacyl]-alpha-D-glucosamine + a (3R)-hydroxyacyl-[ACP] = a UDP-2-N,3-O-bis[(3R)-3-hydroxyacyl]-alpha-D-glucosamine + holo-[ACP] + H(+). Its pathway is bacterial outer membrane biogenesis; LPS lipid A biosynthesis. Its function is as follows. Catalyzes the N-acylation of UDP-3-O-acylglucosamine using 3-hydroxyacyl-ACP as the acyl donor. Is involved in the biosynthesis of lipid A, a phosphorylated glycolipid that anchors the lipopolysaccharide to the outer membrane of the cell. In Chlamydia felis (strain Fe/C-56) (Chlamydophila felis), this protein is UDP-3-O-acylglucosamine N-acyltransferase.